The following is a 148-amino-acid chain: Putative pre-16S rRNA nuclease (148 aa).

It belongs to the YqgF nuclease family.

It localises to the cytoplasm. Its function is as follows. Could be a nuclease involved in processing of the 5'-end of pre-16S rRNA. The chain is Putative pre-16S rRNA nuclease from Colwellia psychrerythraea (strain 34H / ATCC BAA-681) (Vibrio psychroerythus).